A 59-amino-acid chain; its full sequence is Potassium channel toxin alpha-KTx 15.5 (59 aa).

The N-terminal stretch at 1-22 (MKFSSIILLTLLICSMSIFGNC) is a signal peptide. At Gln23 the chain carries Pyrrolidone carboxylic acid. 3 disulfide bridges follow: Cys30-Cys50, Cys35-Cys55, and Cys39-Cys57.

This sequence belongs to the short scorpion toxin superfamily. Potassium channel inhibitor family. Alpha-KTx 15 subfamily. As to expression, expressed by the venom gland.

It is found in the secreted. Functionally, blocker of A-type voltage-gated potassium channels of cerebellar granular cells. May also inhibit Kv4/KCND when coexpressed with DPP6 or DPP10. The occlusion of the outer entry of the K(+) conducting pore is partially reversible and affects both open and closed channels. It shares the same target in rat brain than BmTX3 (AC Q8I0L5) and AmmTX3 (AC P60208). The polypeptide is Potassium channel toxin alpha-KTx 15.5 (Androctonus australis (Sahara scorpion)).